We begin with the raw amino-acid sequence, 541 residues long: Glucans biosynthesis protein D (541 aa).

The segment at residues M1–A29 is a signal peptide (tat-type signal).

Belongs to the OpgD/OpgG family. Post-translationally, predicted to be exported by the Tat system. The position of the signal peptide cleavage has not been experimentally proven.

It localises to the periplasm. The protein operates within glycan metabolism; osmoregulated periplasmic glucan (OPG) biosynthesis. Probably involved in the control of the structural glucose backbone of osmoregulated periplasmic glucans (OPGs). The chain is Glucans biosynthesis protein D from Pseudomonas fluorescens (strain SBW25).